The chain runs to 391 residues: Alkanesulfonate monooxygenase (391 aa).

This sequence belongs to the SsuD family.

The catalysed reaction is an alkanesulfonate + FMNH2 + O2 = an aldehyde + FMN + sulfite + H2O + 2 H(+). In terms of biological role, catalyzes the desulfonation of aliphatic sulfonates. The chain is Alkanesulfonate monooxygenase from Rhodopseudomonas palustris (strain ATCC BAA-98 / CGA009).